The following is a 501-amino-acid chain: G protein-activated inward rectifier potassium channel 1 (501 aa).

The tract at residues methionine 1 to lysine 40 is disordered. Residues methionine 1–tryptophan 80 are Cytoplasmic-facing. A compositionally biased stretch (low complexity) spans serine 18–leucine 37. The chain crosses the membrane as a helical span at residues arginine 81–isoleucine 105. Residues alanine 106–asparagine 129 are Extracellular-facing. Asparagine 119 carries an N-linked (GlcNAc...) asparagine glycan. The helical; Pore-forming intramembrane region spans phenylalanine 130 to glutamate 141. The pore-forming intramembrane region spans alanine 142–tyrosine 148. Positions threonine 143–tyrosine 148 match the Selectivity filter motif. Over arginine 149–glutamate 157 the chain is Extracellular. The helical transmembrane segment at glycine 158–cysteine 179 threads the bilayer. The Cytoplasmic segment spans residues methionine 180–threonine 501. Positions isoleucine 182–leucine 209 are polyphosphoinositide (PIP2)-binding. Phosphoserine occurs at positions 385 and 424.

This sequence belongs to the inward rectifier-type potassium channel (TC 1.A.2.1) family. KCNJ3 subfamily. In terms of assembly, associates with KCNJ5/GIRK4 or KCNJ6/GIRK2 or KCNJ9/GIRK3 to form a G-protein activated heteromultimer pore-forming unit. The resulting inward current is much larger.

It localises to the membrane. It carries out the reaction K(+)(in) = K(+)(out). Heteromultimer composed of KCNJ3/GIRK1 and KCNJ5/GIRK4 is activated by phosphatidylinositol 4,5 biphosphate (PtdIns(4,5)P2). Its function is as follows. Inward rectifier potassium channels are characterized by a greater tendency to allow potassium to flow into the cell rather than out of it. Their voltage dependence is regulated by the concentration of extracellular potassium; as external potassium is raised, the voltage range of the channel opening shifts to more positive voltages. The inward rectification is mainly due to the blockage of outward current by internal magnesium. This potassium channel is controlled by G proteins. This receptor plays a crucial role in regulating the heartbeat. This chain is G protein-activated inward rectifier potassium channel 1 (KCNJ3), found in Bos taurus (Bovine).